The chain runs to 273 residues: Nitrogenase iron protein 4 (273 aa).

8 to 15 (GKGGIGKS) lines the ATP pocket. C94 serves as a coordination point for [4Fe-4S] cluster. ADP-ribosylarginine; by dinitrogenase reductase ADP-ribosyltransferase is present on R97. Position 129 (C129) interacts with [4Fe-4S] cluster.

It belongs to the NifH/BchL/ChlL family. As to quaternary structure, homodimer. Requires [4Fe-4S] cluster as cofactor. Post-translationally, the reversible ADP-ribosylation of Arg-97 inactivates the nitrogenase reductase and regulates nitrogenase activity.

The catalysed reaction is N2 + 8 reduced [2Fe-2S]-[ferredoxin] + 16 ATP + 16 H2O = H2 + 8 oxidized [2Fe-2S]-[ferredoxin] + 2 NH4(+) + 16 ADP + 16 phosphate + 6 H(+). In terms of biological role, the key enzymatic reactions in nitrogen fixation are catalyzed by the nitrogenase complex, which has 2 components: the iron protein and the molybdenum-iron protein. This Clostridium pasteurianum protein is Nitrogenase iron protein 4 (nifH4).